Consider the following 462-residue polypeptide: UDP-N-acetylmuramate--L-alanine ligase (462 aa).

117-123 (GTHGKTT) lines the ATP pocket.

The protein belongs to the MurCDEF family.

It localises to the cytoplasm. It catalyses the reaction UDP-N-acetyl-alpha-D-muramate + L-alanine + ATP = UDP-N-acetyl-alpha-D-muramoyl-L-alanine + ADP + phosphate + H(+). It functions in the pathway cell wall biogenesis; peptidoglycan biosynthesis. Cell wall formation. The polypeptide is UDP-N-acetylmuramate--L-alanine ligase (Streptomyces coelicolor (strain ATCC BAA-471 / A3(2) / M145)).